The sequence spans 147 residues: Peptide methionine sulfoxide reductase MsrB 2 (147 aa).

The 124-residue stretch at 6-129 (TDEEVSKLTP…NSAALRFIPR (124 aa)) folds into the MsrB domain. Residue Cys-118 is the Nucleophile of the active site.

The protein belongs to the MsrB Met sulfoxide reductase family.

The catalysed reaction is L-methionyl-[protein] + [thioredoxin]-disulfide + H2O = L-methionyl-(R)-S-oxide-[protein] + [thioredoxin]-dithiol. The protein is Peptide methionine sulfoxide reductase MsrB 2 (msrB2) of Rhizobium meliloti (strain 1021) (Ensifer meliloti).